A 277-amino-acid polypeptide reads, in one-letter code: Alpha-ketoglutarate-dependent dioxygenase tstK (277 aa).

It belongs to the asaB hydroxylase/desaturase family.

The enzyme catalyses 2-[(1R,8S,14R,15R)-11-hydroxy-14,15-bis[(6E)-oct-6-en-1-yl]-3,5,9-trioxo-4,10-dioxatetracyclo[9.4.0.0(2,6).0(8,12)]pentadeca-2(6),12-dien-8-yl]acetate + 3 2-oxoglutarate + 3 O2 = phomoidride A + 3 succinate + 3 CO2 + H2O. Functionally, alpha-ketoglutarate-dependent dioxygenase; part of the gene cluster that mediates the biosynthesis of the antihypercholesterolemic agents phomoidrides which are dimeric anhydrides. Within the pathway, tstK is responsible for the iterative oxidation necessary to convert prephomoidride to phomoidride A. The pathway begins with the highly reducing polyketide synthase tstiA that catalyzes the formation of a C12-fatty acyl-ACP, starting from one acetate and 5 malonate units. The hydrolase tstM is involved in the release of the C12-fatty acyl chain from phiA. The alkylcitrate synthase (ACS) tstJ and the alkylcitrate dehydratase (ACDH) tstI then give rise to decarboxylated monomeric anhydrides by coupling the C12-fatty acyl chain with oxalacetic acid. The cyclase tstC is responsible for the dimerization of the monomeric anhydrides which leads to the production of prephomoidride that contains the characteristic bicyclo[4.3.1]deca-1,6-diene system of phomoidrides. Iterative oxidation catalyzed by the alpha-ketoglutarate-dependent dioxygenase tstK produced then phomoidride A. Finally, the methyltransferase tstE converts phomoidride A to phomoidride B via an acetalization reaction. The phosphatidylethanolamine-binding protein tstB and tstN are not essential for dimerization and their functions have still to be determined. In Talaromyces stipitatus (strain ATCC 10500 / CBS 375.48 / QM 6759 / NRRL 1006) (Penicillium stipitatum), this protein is Alpha-ketoglutarate-dependent dioxygenase tstK.